The chain runs to 140 residues: Probable glycine cleavage system H protein (140 aa).

Residues Arg22–Glu114 enclose the Lipoyl-binding domain. Residue Lys63 is modified to N6-lipoyllysine.

Belongs to the GcvH family. The glycine cleavage system is composed of four proteins: P, T, L and H. (R)-lipoate serves as cofactor.

In terms of biological role, the glycine cleavage system catalyzes the degradation of glycine. The H protein shuttles the methylamine group of glycine from the P protein to the T protein. This chain is Probable glycine cleavage system H protein, found in Korarchaeum cryptofilum (strain OPF8).